Reading from the N-terminus, the 205-residue chain is Mediator of RNA polymerase II transcription subunit 29 (205 aa).

Residues 1 to 27 (MNPNMNMMQMSGPPMMQVSPMMQSSPQ) are compositionally biased toward low complexity. Positions 1 to 65 (MNPNMNMMQM…QQQQQQAEKL (65 aa)) are disordered. Residues 28-38 (PMMPTGPPGPV) show a composition bias toward pro residues. The segment covering 39–61 (PMQQQHQQQQQQQQQQQQQQQQQ) has biased composition (low complexity).

It belongs to the Mediator complex subunit 29 family. As to quaternary structure, component of the Mediator complex.

Its subcellular location is the nucleus. In terms of biological role, component of the Mediator complex, a coactivator involved in the regulated transcription of nearly all RNA polymerase II-dependent genes. Mediator functions as a bridge to convey information from gene-specific regulatory proteins to the basal RNA polymerase II transcription machinery. Mediator is recruited to promoters by direct interactions with regulatory proteins and serves as a scaffold for the assembly of a functional preinitiation complex with RNA polymerase II and the general transcription factors. This is Mediator of RNA polymerase II transcription subunit 29 (ix) from Drosophila virilis (Fruit fly).